The following is a 256-amino-acid chain: DNA repair protein RecO (256 aa).

The protein belongs to the RecO family.

Involved in DNA repair and RecF pathway recombination. The sequence is that of DNA repair protein RecO from Shouchella clausii (strain KSM-K16) (Alkalihalobacillus clausii).